We begin with the raw amino-acid sequence, 656 residues long: CXXC-type zinc finger protein 1 (656 aa).

Methionine 1 carries the post-translational modification N-acetylmethionine. Positions 1–14 (MEGDGSDPEPPDAG) are enriched in acidic residues. A disordered region spans residues 1-20 (MEGDGSDPEPPDAGEDSKSE). Residues serine 6 and serine 19 each carry the phosphoserine modification. The segment at 28–76 (YCICRKPDINCFMIGCDNCNEWFHGDCIRITEKMAKAIREWYCRECREK) adopts a PHD-type zinc-finger fold. The disordered stretch occupies residues 84-162 (YRHKKSRERD…QHHQQQQQQI (79 aa)). Over residues 90–120 (RERDGNERDSSEPRDEGGGRKRPVPDPDLQR) the composition is skewed to basic and acidic residues. Phosphoserine is present on serine 124. Residues 160–209 (QQIKRSARMCGECEACRRTEDCGHCDFCRDMKKFGGPNKIRQKCRLRQCQ) form a CXXC-type zinc finger. Positions 169, 172, 175, 181, 184, 187, 203, and 208 each coordinate Zn(2+). 2 disordered regions span residues 219–287 (FPSS…LPLD) and 311–373 (EESP…ASLP). Residue serine 224 is modified to Phosphoserine. Phosphothreonine is present on threonine 227. A compositionally biased stretch (low complexity) spans 239 to 249 (LPTQQQPQPSQ). Residue lysine 250 forms a Glycyl lysine isopeptide (Lys-Gly) (interchain with G-Cter in SUMO2) linkage. Residues 321–334 (RKRAVKVKHVKRRE) are compositionally biased toward basic residues. Residues 335 to 345 (KKSEKKKEERY) show a composition bias toward basic and acidic residues. The span at 346 to 358 (KRHRQKQKHKDKW) shows a compositional bias: basic residues. Positions 359 to 368 (KHPERADAKD) are enriched in basic and acidic residues. Residues 422-474 (AEEHGKKLLERIRREQQSARTRLQEMERRFHELEAIILRAKQQAVREDEESNE) adopt a coiled-coil conformation.

In terms of assembly, component of the SET1 complex, at least composed of the catalytic subunit (SETD1A or SETD1B), WDR5, WDR82, RBBP5, ASH2L/ASH2, CXXC1/CFP1 HCFC1 and DPY30. Interacts with SETD1A. Interacts with ZNF335. Interacts with PRDM9; this interaction does not link PRDM9-activated recombination hotspot sites with DSB machinery and is not required for the hotspot recognition pathway. Interacts with histone H3K4me3. Post-translationally, may be regulated by proteolysis. As to expression, ubiquitous.

It is found in the nucleus speckle. The protein resides in the nucleus. Its function is as follows. Transcriptional activator that exhibits a unique DNA binding specificity for CpG unmethylated motifs with a preference for CpGG. This chain is CXXC-type zinc finger protein 1 (CXXC1), found in Homo sapiens (Human).